The following is a 138-amino-acid chain: Small ribosomal subunit protein uS12 (138 aa).

Polar residues predominate over residues 1–22; that stretch reads MPTINQLVRQGRKSISTKSDSP. A disordered region spans residues 1–45; sequence MPTINQLVRQGRKSISTKSDSPALNFGYNSKKKSLTNNPAPQKRG. Position 102 is a 3-methylthioaspartic acid (D102).

It belongs to the universal ribosomal protein uS12 family. In terms of assembly, part of the 30S ribosomal subunit. Contacts proteins S8 and S17. May interact with IF1 in the 30S initiation complex.

With S4 and S5 plays an important role in translational accuracy. Its function is as follows. Interacts with and stabilizes bases of the 16S rRNA that are involved in tRNA selection in the A site and with the mRNA backbone. Located at the interface of the 30S and 50S subunits, it traverses the body of the 30S subunit contacting proteins on the other side and probably holding the rRNA structure together. The combined cluster of proteins S8, S12 and S17 appears to hold together the shoulder and platform of the 30S subunit. The chain is Small ribosomal subunit protein uS12 from Lacticaseibacillus paracasei (strain ATCC 334 / BCRC 17002 / CCUG 31169 / CIP 107868 / KCTC 3260 / NRRL B-441) (Lactobacillus paracasei).